A 59-amino-acid polypeptide reads, in one-letter code: Large ribosomal subunit protein bL32 (59 aa).

The interval 1–59 is disordered; sequence MAVQQNKKSPSKRGMHRSHDHLSVAPLAVEPTTGETHLRHHVSPNGYYRGRKVIKTKND. Basic residues-rich tracts occupy residues 9–19 and 49–59; these read SPSKRGMHRSH and RGRKVIKTKND.

Belongs to the bacterial ribosomal protein bL32 family.

In Cupriavidus metallidurans (strain ATCC 43123 / DSM 2839 / NBRC 102507 / CH34) (Ralstonia metallidurans), this protein is Large ribosomal subunit protein bL32.